Here is a 594-residue protein sequence, read N- to C-terminus: Protein FAM200C (594 aa).

This chain is Protein FAM200C (FAM200C), found in Bos taurus (Bovine).